We begin with the raw amino-acid sequence, 624 residues long: LRR receptor kinase BAK1 (624 aa).

A signal peptide spans 1-25 (MAAHRWAVWAVLLLRLLVPAARVLA). Residues 26–237 (NMEGDALHSL…QSPGSSSSTG (212 aa)) are Extracellular-facing. 4 LRR repeats span residues 91–115 (LKNL…LGNL), 117–139 (NLVS…LGNL), 140–163 (LKLR…LTAI), and 164–188 (TALQ…SFSL). N-linked (GlcNAc...) asparagine glycosylation is found at asparagine 103, asparagine 114, asparagine 127, asparagine 149, and asparagine 175. Residues 205–236 (TTKPCPGAPPFSPPPPYNPPTPVQSPGSSSST) are disordered. Residues 210–227 (PGAPPFSPPPPYNPPTPV) show a composition bias toward pro residues. A helical membrane pass occupies residues 238–258 (AIAGGVAAGAALLFAIPAIGF). Residues 259 to 624 (AWYRRRKPQE…LHAVELSGPR (366 aa)) lie on the Cytoplasmic side of the membrane. The region spanning 301-588 (FSNKNILGRG…GLAERWEEWQ (288 aa)) is the Protein kinase domain. ATP is bound by residues 307–315 (LGRGGFGKV) and lysine 329. Aspartate 428 functions as the Proton acceptor in the catalytic mechanism.

Belongs to the protein kinase superfamily. Ser/Thr protein kinase family. Forms homodimers. Interacts with BRI1. Interacts with REM4.1. Expressed in developing lateral roots, shoot apex, leaf blades, lamina joints and flowers. Expressed at low levels in leaf sheaths and panicles.

The protein resides in the cell membrane. It carries out the reaction L-seryl-[protein] + ATP = O-phospho-L-seryl-[protein] + ADP + H(+). The enzyme catalyses L-threonyl-[protein] + ATP = O-phospho-L-threonyl-[protein] + ADP + H(+). Its function is as follows. LRR receptor kinase involved in defense response. Does not seem to be required specifically for XA21-mediated immunity or basal resistance to Xanthomonas oryzae pv. oryzae (Xoo), or immunity to Magnaporthe oryzae. Involved in brassinosteroid (BR) signaling pathway. Acts as a coreceptor of BRI1. Forms at the plasma membrane a receptor complex with BRI1 which is activated in response to brassinolide. Phosphorylates BRI1. Required for normal plant growth and leaf development. Possesses kinase activity in vitro. The protein is LRR receptor kinase BAK1 of Oryza sativa subsp. japonica (Rice).